Here is a 196-residue protein sequence, read N- to C-terminus: GTP cyclohydrolase 1 (196 aa).

Zn(2+)-binding residues include cysteine 86, histidine 89, and cysteine 157.

Belongs to the GTP cyclohydrolase I family. Toroid-shaped homodecamer, composed of two pentamers of five dimers.

The enzyme catalyses GTP + H2O = 7,8-dihydroneopterin 3'-triphosphate + formate + H(+). Its pathway is cofactor biosynthesis; 7,8-dihydroneopterin triphosphate biosynthesis; 7,8-dihydroneopterin triphosphate from GTP: step 1/1. The chain is GTP cyclohydrolase 1 from Parabacteroides distasonis (strain ATCC 8503 / DSM 20701 / CIP 104284 / JCM 5825 / NCTC 11152).